A 561-amino-acid polypeptide reads, in one-letter code: Arginine--tRNA ligase (561 aa).

Positions 128–138 match the 'HIGH' region motif; the sequence is ANPTGPLHVGH.

This sequence belongs to the class-I aminoacyl-tRNA synthetase family. In terms of assembly, monomer.

It is found in the cytoplasm. The enzyme catalyses tRNA(Arg) + L-arginine + ATP = L-arginyl-tRNA(Arg) + AMP + diphosphate. This is Arginine--tRNA ligase from Leptothrix cholodnii (strain ATCC 51168 / LMG 8142 / SP-6) (Leptothrix discophora (strain SP-6)).